A 265-amino-acid polypeptide reads, in one-letter code: Auxin-responsive protein IAA22 (265 aa).

Disordered regions lie at residues 54–88 (LSTP…ERRP) and 172–199 (DGRE…SPAM). The segment covering 65–88 (LMNKMKPCSDEGHGSRDAAQERRP) has biased composition (basic and acidic residues). The PB1 domain maps to 91 to 194 (TMFVKVNLEG…GVDQVSERPD (104 aa)).

It belongs to the Aux/IAA family. As to quaternary structure, homodimers and heterodimers. Highly expressed in flowers. Expressed in roots and seedlings.

The protein localises to the nucleus. Functionally, aux/IAA proteins are short-lived transcriptional factors that function as repressors of early auxin response genes at low auxin concentrations. This is Auxin-responsive protein IAA22 (IAA22) from Oryza sativa subsp. japonica (Rice).